Reading from the N-terminus, the 60-residue chain is Large ribosomal subunit protein uL30 (60 aa).

This sequence belongs to the universal ribosomal protein uL30 family. As to quaternary structure, part of the 50S ribosomal subunit.

This Leifsonia xyli subsp. xyli (strain CTCB07) protein is Large ribosomal subunit protein uL30.